Here is a 90-residue protein sequence, read N- to C-terminus: YcgL domain-containing protein plu2139 (90 aa).

Residues 1-85 enclose the YcgL domain; the sequence is MICAIYSSPK…PVENLMNAHL (85 aa).

This chain is YcgL domain-containing protein plu2139, found in Photorhabdus laumondii subsp. laumondii (strain DSM 15139 / CIP 105565 / TT01) (Photorhabdus luminescens subsp. laumondii).